We begin with the raw amino-acid sequence, 1567 residues long: Transmembrane protein 131 homolog (1567 aa).

A signal peptide spans 1–32 (MPTQVQMRPLLRIFAEPILLILIFLFTLGAKG). At 33 to 1049 (EKVLQETFLG…RPGWESSLKN (1017 aa)) the chain is on the lumenal side. Positions 55 to 228 (RLVPSRLDFG…TLKPVIRISF (174 aa)) are papD-L domain. 13 N-linked (GlcNAc...) asparagine glycosylation sites follow: Asn-84, Asn-114, Asn-168, Asn-235, Asn-316, Asn-317, Asn-342, Asn-372, Asn-409, Asn-462, Asn-563, Asn-890, and Asn-1013. Residues 1050–1070 (AALVVLLASFGLVLVAAVFDA) traverse the membrane as a helical segment. Residues 1071 to 1567 (KAIMVQQNAY…SQRNNHNHMN (497 aa)) lie on the Cytoplasmic side of the membrane. The stretch at 1096–1130 (RNIVKLQAEEAAAKAESVQQQQKVKNGQLKELRKR) forms a coiled coil. Disordered stretches follow at residues 1112–1337 (SVQQ…SPDA), 1364–1386 (PTDNGFDWNHATSSSDLGPIGDN), and 1502–1567 (PGLE…NHMN). Low complexity-rich tracts occupy residues 1132–1150 (VVNSTNSKSKSKSSWSPWS) and 1166–1183 (KTVVSTPVTPPAASAPAA). Phosphoserine occurs at positions 1201 and 1258. The span at 1247-1259 (AKSSPPQQENISP) shows a compositional bias: polar residues. The segment covering 1284–1298 (PGRERERERRSKDQK) has biased composition (basic and acidic residues). The segment covering 1319-1331 (KLNFGQTTNSTSP) has biased composition (polar residues). 2 stretches are compositionally biased toward polar residues: residues 1507–1519 (SARQTHNLAQEQV) and 1536–1561 (LPTQYDPFTSPSSIWSDTWRQSSQRN).

Belongs to the TMEM131 family. May interact (via PapD-L domain) with collagen proteins (via C-terminus); the interaction is direct and is involved in assembly and TRAPPIII ER-to-Golgi transport complex-dependent secretion of collagen.

The protein localises to the membrane. In terms of biological role, collagen binding transmembrane protein involved in collagen secretion, probably by recruiting the ER-to-Golgi transport complex TRAPPIII. In Drosophila melanogaster (Fruit fly), this protein is Transmembrane protein 131 homolog.